A 545-amino-acid polypeptide reads, in one-letter code: CTP synthase (545 aa).

The tract at residues 1-266 (MTTRYIFVTG…DDLVVKRFGL (266 aa)) is amidoligase domain. Serine 14 contacts CTP. Residue serine 14 coordinates UTP. Residues 15-20 (SLGKGI) and aspartate 72 each bind ATP. 2 residues coordinate Mg(2+): aspartate 72 and glutamate 140. CTP is bound by residues 147-149 (DIE), 187-192 (KTKPTQ), and lysine 223. Residues 187–192 (KTKPTQ) and lysine 223 each bind UTP. 239-241 (KDV) contributes to the ATP binding site. One can recognise a Glutamine amidotransferase type-1 domain in the interval 291–542 (VIGMVGKYIE…IAAASAHQKR (252 aa)). L-glutamine is bound at residue glycine 352. Cysteine 379 serves as the catalytic Nucleophile; for glutamine hydrolysis. Residues 380–383 (LGMQ), glutamate 403, and arginine 470 each bind L-glutamine. Active-site residues include histidine 515 and glutamate 517.

The protein belongs to the CTP synthase family. In terms of assembly, homotetramer.

The enzyme catalyses UTP + L-glutamine + ATP + H2O = CTP + L-glutamate + ADP + phosphate + 2 H(+). The catalysed reaction is L-glutamine + H2O = L-glutamate + NH4(+). It catalyses the reaction UTP + NH4(+) + ATP = CTP + ADP + phosphate + 2 H(+). It functions in the pathway pyrimidine metabolism; CTP biosynthesis via de novo pathway; CTP from UDP: step 2/2. Allosterically activated by GTP, when glutamine is the substrate; GTP has no effect on the reaction when ammonia is the substrate. The allosteric effector GTP functions by stabilizing the protein conformation that binds the tetrahedral intermediate(s) formed during glutamine hydrolysis. Inhibited by the product CTP, via allosteric rather than competitive inhibition. Functionally, catalyzes the ATP-dependent amination of UTP to CTP with either L-glutamine or ammonia as the source of nitrogen. Regulates intracellular CTP levels through interactions with the four ribonucleotide triphosphates. The chain is CTP synthase from Shewanella baltica (strain OS155 / ATCC BAA-1091).